A 285-amino-acid polypeptide reads, in one-letter code: Bifunctional protein FolD (285 aa).

NADP(+)-binding positions include Gly165 to Ser167 and Ser190.

The protein belongs to the tetrahydrofolate dehydrogenase/cyclohydrolase family. In terms of assembly, homodimer.

It carries out the reaction (6R)-5,10-methylene-5,6,7,8-tetrahydrofolate + NADP(+) = (6R)-5,10-methenyltetrahydrofolate + NADPH. It catalyses the reaction (6R)-5,10-methenyltetrahydrofolate + H2O = (6R)-10-formyltetrahydrofolate + H(+). Its pathway is one-carbon metabolism; tetrahydrofolate interconversion. Its function is as follows. Catalyzes the oxidation of 5,10-methylenetetrahydrofolate to 5,10-methenyltetrahydrofolate and then the hydrolysis of 5,10-methenyltetrahydrofolate to 10-formyltetrahydrofolate. This chain is Bifunctional protein FolD, found in Burkholderia thailandensis (strain ATCC 700388 / DSM 13276 / CCUG 48851 / CIP 106301 / E264).